A 388-amino-acid polypeptide reads, in one-letter code: Putative pyridoxal phosphate-dependent aminotransferase EpsN (388 aa).

The residue at position 190 (Lys-190) is an N6-(pyridoxal phosphate)lysine.

The protein belongs to the DegT/DnrJ/EryC1 family. Requires pyridoxal 5'-phosphate as cofactor.

May be involved in the production of the exopolysaccharide (EPS) component of the extracellular matrix during biofilm formation. EPS is responsible for the adhesion of chains of cells into bundles. The sequence is that of Putative pyridoxal phosphate-dependent aminotransferase EpsN (epsN) from Bacillus subtilis (strain 168).